A 742-amino-acid polypeptide reads, in one-letter code: Collectin-12 (742 aa).

At 1 to 37 (MKDDFAEEEEVQSFGYKRFGIQEGTQCTKCKNNWALK) the chain is on the cytoplasmic side. A helical; Signal-anchor for type II membrane protein transmembrane segment spans residues 38-58 (FSIILLYVLCALLTITVAILG). Residues 59 to 742 (YKVVEKMDTV…EREAVPSSIL (684 aa)) lie on the Extracellular side of the membrane. Residues 104-142 (TNSELSTFRSDILDLRQQLQEITEKTSKNKDMLEKLQAN) adopt a coiled-coil conformation. N-linked (GlcNAc...) asparagine glycosylation is found at N159, N168, and N271. A coiled-coil region spans residues 220–301 (ITNLQRSVDD…SFTGQMDNIT (82 aa)). Residues 439 to 608 (TILQGPPGPR…TPASEVNGCP (170 aa)) are disordered. Collagen-like domains are found at residues 452–511 (GDRG…KGSR) and 527–586 (GPPG…PGPS). Over residues 501 to 514 (SKGSQGPKGSRGSP) the composition is skewed to low complexity. Over residues 516-532 (KPGPQGPSGDPGPPGPP) the composition is skewed to pro residues. Low complexity predominate over residues 534 to 556 (KDGLPGPQGPPGFQGLQGTVGEP). The segment covering 571–585 (PGMPGPKGPPGPPGP) has biased composition (pro residues). 3 disulfides stabilise this stretch: C607/C618, C635/C730, and C708/C722. The C-type lectin domain maps to 614 to 731 (FTDKCYYFSV…CDEINNFICE (118 aa)). Ca(2+) contacts are provided by F644, N646, E650, D670, and E674. A carbohydrate-binding residues include K691, Q694, and D696. Residues Q694, D696, N697, E706, D707, N718, D719, and E731 each contribute to the Ca(2+) site. Residue E706 participates in a carbohydrate binding. N718 and D719 together coordinate a carbohydrate.

In terms of assembly, the extracellular domain forms a stable trimer. The extracellular domain interacts with fibrillar amyloid-beta peptide. Highly expressed in lung, spleen, small and large intestine, stomach and brain. Expressed in neonatal microglia.

Its subcellular location is the membrane. Its function is as follows. Scavenger receptor that displays several functions associated with host defense. Promotes binding and phagocytosis of Gram-positive, Gram-negative bacteria and yeast. Mediates the recognition, internalization and degradation of oxidatively modified low density lipoprotein (oxLDL) by vascular endothelial cells. Binds to several carbohydrates including Gal-type ligands, D-galactose, L- and D-fucose, GalNAc, T and Tn antigens in a calcium-dependent manner and internalizes specifically GalNAc in nurse-like cells. Also binds to sialyl Lewis X or a trisaccharide and asialo-orosomucoid (ASOR). The sequence is that of Collectin-12 (Colec12) from Rattus norvegicus (Rat).